We begin with the raw amino-acid sequence, 479 residues long: UDP-glycosyltransferase 85A8 (479 aa).

Residues serine 302, 358–359 (WC), 376–384 (HSGWNSTIE), and 398–401 (FAEQ) contribute to the UDP-alpha-D-glucose site.

This sequence belongs to the UDP-glycosyltransferase family.

In terms of biological role, may glycosylate diterpenes or flavonols in leaves. The sequence is that of UDP-glycosyltransferase 85A8 from Stevia rebaudiana (Stevia).